The following is a 513-amino-acid chain: Bifunctional pantoate ligase/cytidylate kinase (513 aa).

Residues 1–282 (MGTFHRLTTT…VGQTRLIDNC (282 aa)) form a pantoate--beta-alanine ligase region. ATP is bound at residue 32 to 39 (MGALHGGH). H39 acts as the Proton donor in catalysis. Residue Q63 participates in (R)-pantoate binding. Q63 lines the beta-alanine pocket. Residue 152 to 155 (GQKD) coordinates ATP. Q158 lines the (R)-pantoate pocket. Residues V181 and 189 to 192 (LSSR) each bind ATP. The cytidylate kinase stretch occupies residues 283-513 (LLDRRRPILA…HLYRSRFPQP (231 aa)).

In the N-terminal section; belongs to the pantothenate synthetase family. The protein in the C-terminal section; belongs to the cytidylate kinase family. Type 1 subfamily.

Its subcellular location is the cytoplasm. It carries out the reaction (R)-pantoate + beta-alanine + ATP = (R)-pantothenate + AMP + diphosphate + H(+). It catalyses the reaction CMP + ATP = CDP + ADP. The enzyme catalyses dCMP + ATP = dCDP + ADP. It participates in cofactor biosynthesis; (R)-pantothenate biosynthesis; (R)-pantothenate from (R)-pantoate and beta-alanine: step 1/1. Functionally, catalyzes the condensation of pantoate with beta-alanine in an ATP-dependent reaction via a pantoyl-adenylate intermediate. Its function is as follows. Catalyzes the transfer of a phosphate group from ATP to either CMP or dCMP to form CDP or dCDP and ADP, respectively. This is Bifunctional pantoate ligase/cytidylate kinase from Thermosynechococcus vestitus (strain NIES-2133 / IAM M-273 / BP-1).